The sequence spans 465 residues: Chromosomal replication initiator protein DnaA (465 aa).

A domain I, interacts with DnaA modulators region spans residues methionine 1–valine 84. The interval valine 84–serine 128 is domain II. The disordered stretch occupies residues alanine 91–alanine 120. Residues asparagine 129–alanine 345 are domain III, AAA+ region. The ATP site is built by glycine 173, glycine 175, lysine 176, and threonine 177. Residues asparagine 346–serine 465 are domain IV, binds dsDNA.

This sequence belongs to the DnaA family. In terms of assembly, oligomerizes as a right-handed, spiral filament on DNA at oriC.

It is found in the cytoplasm. In terms of biological role, plays an essential role in the initiation and regulation of chromosomal replication. ATP-DnaA binds to the origin of replication (oriC) to initiate formation of the DNA replication initiation complex once per cell cycle. Binds the DnaA box (a 9 base pair repeat at the origin) and separates the double-stranded (ds)DNA. Forms a right-handed helical filament on oriC DNA; dsDNA binds to the exterior of the filament while single-stranded (ss)DNA is stabiized in the filament's interior. The ATP-DnaA-oriC complex binds and stabilizes one strand of the AT-rich DNA unwinding element (DUE), permitting loading of DNA polymerase. After initiation quickly degrades to an ADP-DnaA complex that is not apt for DNA replication. Binds acidic phospholipids. This chain is Chromosomal replication initiator protein DnaA, found in Pectobacterium carotovorum subsp. carotovorum (strain PC1).